Consider the following 129-residue polypeptide: Arsenate-mycothiol transferase ArsC2 (129 aa).

The protein belongs to the low molecular weight phosphotyrosine protein phosphatase family.

The protein localises to the cytoplasm. The catalysed reaction is mycothiol + arsenate = arseno-mycothiol + H2O. Its function is as follows. Involved in defense against toxic arsenate. Involved in the mycothiol/myoredoxin redox pathway which uses a mycothioltransferase mechanism; facilitates adduct formation between arsenate and mycothiol. The chain is Arsenate-mycothiol transferase ArsC2 (arsC2) from Corynebacterium glutamicum (strain ATCC 13032 / K051).